Reading from the N-terminus, the 250-residue chain is DNA repair protein RecO (250 aa).

This sequence belongs to the RecO family.

In terms of biological role, involved in DNA repair and RecF pathway recombination. The protein is DNA repair protein RecO of Granulibacter bethesdensis (strain ATCC BAA-1260 / CGDNIH1).